A 443-amino-acid polypeptide reads, in one-letter code: Magnesium transporter MRS2-10 (443 aa).

The tract at residues 1-33 (MSELKERLLPPRPASAINLRGDAGSRPSPSGRQ) is disordered. 2 helical membrane-spanning segments follow: residues 379-399 (LLLTTATFVVAIFGVVAGIFG) and 415-435 (WVLAITGVCGLVVFLAFLWYY). The Required for magnesium transport activity signature appears at 399-401 (GMN).

The protein belongs to the CorA metal ion transporter (MIT) (TC 1.A.35.5) family. As to expression, expressed in the whole plant.

The protein resides in the cell membrane. In terms of biological role, high-affinity magnesium transporter that mediates the influx of magnesium. Involved in tolerance to Aluminum. The polypeptide is Magnesium transporter MRS2-10 (MRS2-10) (Arabidopsis thaliana (Mouse-ear cress)).